A 340-amino-acid chain; its full sequence is Ketol-acid reductoisomerase (NADP(+)) (340 aa).

The 182-residue stretch at 1–182 (MRVYYDRDCD…GGGRSGIIET (182 aa)) folds into the KARI N-terminal Rossmann domain. NADP(+)-binding positions include 24–27 (YGSQ), R48, S51, S53, and 83–86 (DELQ). Residue H108 is part of the active site. An NADP(+)-binding site is contributed by G134. In terms of domain architecture, KARI C-terminal knotted spans 183–329 (NFRQECETDL…EKLRGMMPWI (147 aa)). Residues D191, E195, E227, and E231 each coordinate Mg(2+). S252 provides a ligand contact to substrate.

It belongs to the ketol-acid reductoisomerase family. It depends on Mg(2+) as a cofactor.

The catalysed reaction is (2R)-2,3-dihydroxy-3-methylbutanoate + NADP(+) = (2S)-2-acetolactate + NADPH + H(+). The enzyme catalyses (2R,3R)-2,3-dihydroxy-3-methylpentanoate + NADP(+) = (S)-2-ethyl-2-hydroxy-3-oxobutanoate + NADPH + H(+). It functions in the pathway amino-acid biosynthesis; L-isoleucine biosynthesis; L-isoleucine from 2-oxobutanoate: step 2/4. It participates in amino-acid biosynthesis; L-valine biosynthesis; L-valine from pyruvate: step 2/4. Its function is as follows. Involved in the biosynthesis of branched-chain amino acids (BCAA). Catalyzes an alkyl-migration followed by a ketol-acid reduction of (S)-2-acetolactate (S2AL) to yield (R)-2,3-dihydroxy-isovalerate. In the isomerase reaction, S2AL is rearranged via a Mg-dependent methyl migration to produce 3-hydroxy-3-methyl-2-ketobutyrate (HMKB). In the reductase reaction, this 2-ketoacid undergoes a metal-dependent reduction by NADPH to yield (R)-2,3-dihydroxy-isovalerate. The chain is Ketol-acid reductoisomerase (NADP(+)) from Paracoccus denitrificans (strain Pd 1222).